Reading from the N-terminus, the 208-residue chain is Protein-L-isoaspartate O-methyltransferase (208 aa).

Residue S59 is part of the active site.

It belongs to the methyltransferase superfamily. L-isoaspartyl/D-aspartyl protein methyltransferase family.

The protein localises to the cytoplasm. The enzyme catalyses [protein]-L-isoaspartate + S-adenosyl-L-methionine = [protein]-L-isoaspartate alpha-methyl ester + S-adenosyl-L-homocysteine. In terms of biological role, catalyzes the methyl esterification of L-isoaspartyl residues in peptides and proteins that result from spontaneous decomposition of normal L-aspartyl and L-asparaginyl residues. It plays a role in the repair and/or degradation of damaged proteins. This chain is Protein-L-isoaspartate O-methyltransferase, found in Pectobacterium atrosepticum (strain SCRI 1043 / ATCC BAA-672) (Erwinia carotovora subsp. atroseptica).